Here is a 538-residue protein sequence, read N- to C-terminus: NAD(P)H-quinone oxidoreductase chain 4 (538 aa).

14 helical membrane passes run 11 to 31 (FPWLSLSILFPIVGALIVPFI), 43 to 63 (YALIISLITFLITVAAYFKGF), 95 to 115 (MPLILLTSFITSLAVLAAWPV), 119 to 139 (PKLFFFLILAMDGGQIAVFAV), 143 to 163 (LLFFLAWELELFPVYLFLAIW), 175 to 195 (FIIYTAGSSLFILLAGLAMGF), 217 to 237 (GFQLLCYSGLLIAFGVKLPIV), 251 to 271 (TAPVHMLLAGILLKMGGYALL), 285 to 305 (FAPLLIVLGVVNIIYAALTSF), 314 to 334 (IAYSSISHMGFVLIGIGSFSS), 340 to 360 (AMLQMVSHGLIGASLFFLVGA), 382 to 404 (IMFALWTACAFASLALPGMSGFI), 425 to 445 (IVVASLAAIGVILTPIYLLSM), and 472 to 492 (IYIIACLLVPIIGIGLYPKIM).

Belongs to the complex I subunit 4 family.

Its subcellular location is the cellular thylakoid membrane. It carries out the reaction a plastoquinone + NADH + (n+1) H(+)(in) = a plastoquinol + NAD(+) + n H(+)(out). It catalyses the reaction a plastoquinone + NADPH + (n+1) H(+)(in) = a plastoquinol + NADP(+) + n H(+)(out). In terms of biological role, NDH-1 shuttles electrons from NAD(P)H, via FMN and iron-sulfur (Fe-S) centers, to quinones in the respiratory chain. The immediate electron acceptor for the enzyme in this species is believed to be plastoquinone. Couples the redox reaction to proton translocation (for every two electrons transferred, four hydrogen ions are translocated across the cytoplasmic membrane), and thus conserves the redox energy in a proton gradient. This Prochlorococcus marinus (strain NATL1A) protein is NAD(P)H-quinone oxidoreductase chain 4.